The following is a 969-amino-acid chain: Alanine--tRNA ligase (969 aa).

The transit peptide at 1-8 (MIKTLLRR) directs the protein to the mitochondrion. Residues H616, H620, C735, and H739 each contribute to the Zn(2+) site.

The protein belongs to the class-II aminoacyl-tRNA synthetase family. Monomer. Requires Zn(2+) as cofactor.

Its subcellular location is the mitochondrion. The protein resides in the cytoplasm. The enzyme catalyses tRNA(Ala) + L-alanine + ATP = L-alanyl-tRNA(Ala) + AMP + diphosphate. Catalyzes the attachment of alanine to tRNA(Ala) in a two-step reaction: alanine is first activated by ATP to form Ala-AMP and then transferred to the acceptor end of tRNA(Ala). Also edits incorrectly charged tRNA(Ala) via its editing domain. In Candida albicans (strain SC5314 / ATCC MYA-2876) (Yeast), this protein is Alanine--tRNA ligase.